Consider the following 240-residue polypeptide: Ribonuclease PH (240 aa).

Residues arginine 87 and glycine 125–arginine 127 each bind phosphate.

It belongs to the RNase PH family. As to quaternary structure, homohexameric ring arranged as a trimer of dimers.

The catalysed reaction is tRNA(n+1) + phosphate = tRNA(n) + a ribonucleoside 5'-diphosphate. Phosphorolytic 3'-5' exoribonuclease that plays an important role in tRNA 3'-end maturation. Removes nucleotide residues following the 3'-CCA terminus of tRNAs; can also add nucleotides to the ends of RNA molecules by using nucleoside diphosphates as substrates, but this may not be physiologically important. Probably plays a role in initiation of 16S rRNA degradation (leading to ribosome degradation) during starvation. This is Ribonuclease PH from Pseudomonas putida (strain ATCC 47054 / DSM 6125 / CFBP 8728 / NCIMB 11950 / KT2440).